A 106-amino-acid chain; its full sequence is Large ribosomal subunit protein uL24 (106 aa).

Belongs to the universal ribosomal protein uL24 family. As to quaternary structure, part of the 50S ribosomal subunit.

Functionally, one of two assembly initiator proteins, it binds directly to the 5'-end of the 23S rRNA, where it nucleates assembly of the 50S subunit. Its function is as follows. One of the proteins that surrounds the polypeptide exit tunnel on the outside of the subunit. In Acinetobacter baylyi (strain ATCC 33305 / BD413 / ADP1), this protein is Large ribosomal subunit protein uL24.